A 255-amino-acid polypeptide reads, in one-letter code: MSNLLGPRDANGIPVPMTVDESIASMKASLLKKIKRSAYVYRVDCGGCNGCEIEIFATLSPLFDAERFGIKVVPSPRHADILLFTGAVTRAMRSPALRAWQSAPDPKICISYGACGNSGGIFHDLYCVWGGTDKIVPVDVYIPGCPPTPAATLYGFAMALGLLEQKIHARGPGELDEQPAEILHGDMVQPLRVKVDREARRLAGYRYGRQIADDYLTQLGQGEEQVARWLEAENDPRLNEIVSHLNHVVEEARIR.

Residues C45, C51, C115, and C145 each contribute to the [4Fe-4S] cluster site.

This sequence belongs to the complex I 20 kDa subunit family. FHL comprises of a formate dehydrogenase, unidentified electron carriers and a hydrogenase (isoenzyme 3). In this non-energy conserving pathway molecular hydrogen and carbodioxide from formate are released. The cofactor is [4Fe-4S] cluster.

The chain is Formate hydrogenlyase subunit 7 (hycG) from Escherichia coli (strain K12).